A 326-amino-acid polypeptide reads, in one-letter code: Septum site-determining protein minD homolog, chloroplastic (326 aa).

A chloroplast-targeting transit peptide spans 1–62 (MASLRLFSTN…LAGETPRIVV (62 aa)). Position 67-74 (67-74 (KGGVGKTT)) interacts with ATP.

Belongs to the ParA family. MinD subfamily. Homodimer. Interacts with MINE1. Binds to ARC3. Interacts with MCD1. Interacts with CDP1/PARC6.

Its subcellular location is the plastid. It localises to the chloroplast inner membrane. With respect to regulation, stimulated ATPase activity by MINE1. In terms of biological role, together with ARC3 and MCD1, regulates FtsZ ring positioning in chloroplasts in an ARC6-dependent manner. Calcium-dependent ATPase required for the correct placement of the plastid division site. Inhibits FtsZ filament and ring formation in the plastid. Mediates inhibition of plastid division. In cooperation with MINE1, prevents FtsZ ring formation anywhere outside of the mid-plastids. The sequence is that of Septum site-determining protein minD homolog, chloroplastic from Arabidopsis thaliana (Mouse-ear cress).